A 216-amino-acid chain; its full sequence is MKFFVDTANINEIKEANELGILDGVTTNPSLVAKEGVDFHERIAEIAKLVPGSVSAEVISLDAEGMIEEGKTLAAISENITVKVPMTVDGLKAVKAFAELGIKTNVTLIFSVPQALLAARAGATYVSPFLGRLDDIGHDGLQLISDIADIFSTHGLPTQIIAASVRHPVHVSEAAKRGAHIATIPLNVIKQLTGHPLTDKGIEKFLADWNKENVEK.

Catalysis depends on lysine 83, which acts as the Schiff-base intermediate with substrate.

The protein belongs to the transaldolase family. Type 3B subfamily.

It is found in the cytoplasm. It carries out the reaction D-sedoheptulose 7-phosphate + D-glyceraldehyde 3-phosphate = D-erythrose 4-phosphate + beta-D-fructose 6-phosphate. It functions in the pathway carbohydrate degradation; pentose phosphate pathway; D-glyceraldehyde 3-phosphate and beta-D-fructose 6-phosphate from D-ribose 5-phosphate and D-xylulose 5-phosphate (non-oxidative stage): step 2/3. Transaldolase is important for the balance of metabolites in the pentose-phosphate pathway. This chain is Probable transaldolase, found in Shouchella clausii (strain KSM-K16) (Alkalihalobacillus clausii).